Reading from the N-terminus, the 350-residue chain is Anthranilate phosphoribosyltransferase (350 aa).

5-phospho-alpha-D-ribose 1-diphosphate-binding positions include glycine 94, 97 to 98, threonine 102, 104 to 107, 122 to 130, and serine 134; these read GS, NVST, and KHGNRSVSS. Glycine 94 lines the anthranilate pocket. Residue serine 106 participates in Mg(2+) binding. An anthranilate-binding site is contributed by asparagine 125. Arginine 180 is an anthranilate binding site. Mg(2+) contacts are provided by aspartate 239 and glutamate 240.

It belongs to the anthranilate phosphoribosyltransferase family. As to quaternary structure, homodimer. Mg(2+) is required as a cofactor.

It catalyses the reaction N-(5-phospho-beta-D-ribosyl)anthranilate + diphosphate = 5-phospho-alpha-D-ribose 1-diphosphate + anthranilate. Its pathway is amino-acid biosynthesis; L-tryptophan biosynthesis; L-tryptophan from chorismate: step 2/5. Its function is as follows. Catalyzes the transfer of the phosphoribosyl group of 5-phosphorylribose-1-pyrophosphate (PRPP) to anthranilate to yield N-(5'-phosphoribosyl)-anthranilate (PRA). In Geotalea uraniireducens (strain Rf4) (Geobacter uraniireducens), this protein is Anthranilate phosphoribosyltransferase.